Here is a 46-residue protein sequence, read N- to C-terminus: Aspartate aminotransferase 1 (46 aa).

The protein belongs to the class-I pyridoxal-phosphate-dependent aminotransferase family. Homodimer. Pyridoxal 5'-phosphate is required as a cofactor.

It catalyses the reaction L-aspartate + 2-oxoglutarate = oxaloacetate + L-glutamate. In terms of biological role, important for the metabolism of amino acids and Krebs-cycle related organic acids. In plants, it is involved in nitrogen metabolism and in aspects of carbon and energy metabolism. In Pseudotsuga menziesii (Douglas-fir), this protein is Aspartate aminotransferase 1.